We begin with the raw amino-acid sequence, 113 residues long: uncharacterized protein (113 aa).

The disordered stretch occupies residues 28–55; it reads CDGGPRRPLSRRGEEARRARAPSYEEQE.

This is an uncharacterized protein from Human cytomegalovirus (strain AD169) (HHV-5).